Reading from the N-terminus, the 1054-residue chain is FERM, ARHGEF and pleckstrin domain-containing protein 2 (1054 aa).

The region spanning 44–324 (LHLRVKLLDN…EYHTFFRLLD (281 aa)) is the FERM domain. Ser389 and Ser439 each carry phosphoserine. Residues 421-527 (EFKDSSSSLT…GAGMDCEEPR (107 aa)) are disordered. A compositionally biased stretch (low complexity) spans 468–492 (PGPGLSTKSPQPSPSSRKSPLSLSP). The 192-residue stretch at 535-726 (EAYFIVKEIL…TEVTTTLQHI (192 aa)) folds into the DH domain. A PH 1 domain is found at 755–852 (EFIREGCLHK…WMLDLNSAIQ (98 aa)). A disordered region spans residues 856-894 (SGGDTAPALPGRTVCTRPPRSPNEVSLEQESEDDARGVR). The 98-residue stretch at 929-1026 (ENQLSGYLLR…WMEVIQGASS (98 aa)) folds into the PH 2 domain. A disordered region spans residues 1029-1054 (GRAPSIVQDGPQPSSGLEGMVRGKEE).

As to quaternary structure, interacts with PLXNA1. Interaction with PLXNA1 or PIP5K1C lowers its guanine nucleotide exchange activity. Dissociates from PLXNA1 when SEMA3A binds to the receptor. Interacts with PIP5K1C via its FERM domain. The interaction with PIP5K1C is enhanced by SEMA3A binding. Interacts with RAC1.

Functions as a guanine nucleotide exchange factor that activates RAC1. May have relatively low activity. Plays a role in the response to class 3 semaphorins and remodeling of the actin cytoskeleton. Plays a role in TNFSF11-mediated osteoclast differentiation, especially in podosome rearrangement and reorganization of the actin cytoskeleton. Regulates the activation of ITGB3, integrin signaling and cell adhesion. The protein is FERM, ARHGEF and pleckstrin domain-containing protein 2 (FARP2) of Homo sapiens (Human).